An 81-amino-acid chain; its full sequence is MDVAAMQVKIVDIIANQLGVDKEIITPEANVVDDLGADSLDVVELVMALEEAFDVEIPDEDAESIRTVKDIFDYLAKNKAA.

Residues 1–79 enclose the Carrier domain; sequence MDVAAMQVKI…DIFDYLAKNK (79 aa). Ser39 is subject to O-(pantetheine 4'-phosphoryl)serine.

The protein belongs to the acyl carrier protein (ACP) family. In terms of processing, 4'-phosphopantetheine is transferred from CoA to a specific serine of apo-ACP by AcpS. This modification is essential for activity because fatty acids are bound in thioester linkage to the sulfhydryl of the prosthetic group.

It localises to the cytoplasm. Its pathway is lipid metabolism; fatty acid biosynthesis. Functionally, carrier of the growing fatty acid chain in fatty acid biosynthesis. This Syntrophobacter fumaroxidans (strain DSM 10017 / MPOB) protein is Acyl carrier protein.